Reading from the N-terminus, the 265-residue chain is Hydroxyethylthiazole kinase (265 aa).

M36 contacts substrate. K112 and S160 together coordinate ATP. G187 contributes to the substrate binding site.

Belongs to the Thz kinase family. Mg(2+) serves as cofactor.

The catalysed reaction is 5-(2-hydroxyethyl)-4-methylthiazole + ATP = 4-methyl-5-(2-phosphooxyethyl)-thiazole + ADP + H(+). Its pathway is cofactor biosynthesis; thiamine diphosphate biosynthesis; 4-methyl-5-(2-phosphoethyl)-thiazole from 5-(2-hydroxyethyl)-4-methylthiazole: step 1/1. Its function is as follows. Catalyzes the phosphorylation of the hydroxyl group of 4-methyl-5-beta-hydroxyethylthiazole (THZ). This is Hydroxyethylthiazole kinase from Clostridium perfringens (strain ATCC 13124 / DSM 756 / JCM 1290 / NCIMB 6125 / NCTC 8237 / Type A).